The following is a 30-amino-acid chain: Glutathione S-transferase (30 aa).

It belongs to the GST superfamily. As to quaternary structure, monomer and homodimer.

The protein resides in the cytoplasm. It catalyses the reaction RX + glutathione = an S-substituted glutathione + a halide anion + H(+). Conjugation of reduced glutathione to a wide number of exogenous and endogenous hydrophobic electrophiles. The chain is Glutathione S-transferase from Pseudomonas fluorescens.